Reading from the N-terminus, the 108-residue chain is Hrp pili protein HrpA (108 aa).

Polar residues predominate over residues 41 to 56; that stretch reads NTGSTDSIDATRSSIS. The segment at 41–72 is disordered; that stretch reads NTGSTDSIDATRSSISKGDAKSAELDGTANEE.

It belongs to the HrpA type 1 family.

It localises to the secreted. Its subcellular location is the fimbrium. Major structural protein of the hrp pilus, which is a component of the type III secretion system (T3SS, Hrp secretion system) required for effector protein delivery, parasitism, and pathogenicity. The hrp pilus functions as a conduit for protein delivery into the host cell. Also, affects the expression of T3SS-associated genes. Required for full expression of genes that encode regulatory, secretion, and effector proteins of the T3SS. HrpA-mediated gene regulation apparently is through effect on the mRNA level of hrpR and hrpS. The protein is Hrp pili protein HrpA (hrpA) of Pseudomonas savastanoi pv. phaseolicola (Pseudomonas syringae pv. phaseolicola).